The sequence spans 614 residues: UvrABC system protein C (614 aa).

A GIY-YIG domain is found at 14–91 (TSPGCYIHKD…IKENKPKYNI (78 aa)). The UVR domain maps to 196 to 231 (DKIIDDLKSKMAVAAQSMEFERAAEYRDLIQAIGTL). Positions 595 to 614 (LSQVAEERVDYQTEGNHNEP) are disordered. The span at 599–614 (AEERVDYQTEGNHNEP) shows a compositional bias: basic and acidic residues.

The protein belongs to the UvrC family. As to quaternary structure, interacts with UvrB in an incision complex.

The protein localises to the cytoplasm. Its function is as follows. The UvrABC repair system catalyzes the recognition and processing of DNA lesions. UvrC both incises the 5' and 3' sides of the lesion. The N-terminal half is responsible for the 3' incision and the C-terminal half is responsible for the 5' incision. This is UvrABC system protein C from Streptococcus pneumoniae serotype 2 (strain D39 / NCTC 7466).